The primary structure comprises 273 residues: Dermonecrotic toxin LsaSicTox-alphaIB1bii (273 aa).

The active site involves histidine 5. The Mg(2+) site is built by glutamate 25 and aspartate 27. Histidine 41 serves as the catalytic Nucleophile. 2 disulfides stabilise this stretch: cysteine 45/cysteine 51 and cysteine 47/cysteine 190. Aspartate 85 serves as a coordination point for Mg(2+).

This sequence belongs to the arthropod phospholipase D family. Class II subfamily. The cofactor is Mg(2+). As to expression, expressed by the venom gland.

The protein localises to the secreted. It carries out the reaction an N-(acyl)-sphingosylphosphocholine = an N-(acyl)-sphingosyl-1,3-cyclic phosphate + choline. It catalyses the reaction an N-(acyl)-sphingosylphosphoethanolamine = an N-(acyl)-sphingosyl-1,3-cyclic phosphate + ethanolamine. The catalysed reaction is a 1-acyl-sn-glycero-3-phosphocholine = a 1-acyl-sn-glycero-2,3-cyclic phosphate + choline. The enzyme catalyses a 1-acyl-sn-glycero-3-phosphoethanolamine = a 1-acyl-sn-glycero-2,3-cyclic phosphate + ethanolamine. Functionally, dermonecrotic toxins cleave the phosphodiester linkage between the phosphate and headgroup of certain phospholipids (sphingolipid and lysolipid substrates), forming an alcohol (often choline) and a cyclic phosphate. This toxin acts on sphingomyelin (SM). It may also act on ceramide phosphoethanolamine (CPE), lysophosphatidylcholine (LPC) and lysophosphatidylethanolamine (LPE), but not on lysophosphatidylserine (LPS), and lysophosphatidylglycerol (LPG). It acts by transphosphatidylation, releasing exclusively cyclic phosphate products as second products. Induces dermonecrosis, hemolysis, increased vascular permeability, edema, inflammatory response, and platelet aggregation. In Loxosceles sabina (Tucson recluse spider), this protein is Dermonecrotic toxin LsaSicTox-alphaIB1bii.